A 200-amino-acid chain; its full sequence is Probable GTP-binding protein EngB (200 aa).

The region spanning 22 to 195 is the EngB-type G domain; it reads GKDEIAFVGR…INNICSGINY (174 aa). GTP-binding positions include 30–37, 57–61, 75–78, 142–145, and 174–176; these read GRSNVGKS, GKTRL, DLPG, TKSD, and FSS. Mg(2+) is bound by residues Ser37 and Thr59.

It belongs to the TRAFAC class TrmE-Era-EngA-EngB-Septin-like GTPase superfamily. EngB GTPase family. Requires Mg(2+) as cofactor.

Its function is as follows. Necessary for normal cell division and for the maintenance of normal septation. The sequence is that of Probable GTP-binding protein EngB from Clostridium acetobutylicum (strain ATCC 824 / DSM 792 / JCM 1419 / IAM 19013 / LMG 5710 / NBRC 13948 / NRRL B-527 / VKM B-1787 / 2291 / W).